The primary structure comprises 252 residues: Triosephosphate isomerase (252 aa).

Asparagine 9–lysine 11 serves as a coordination point for substrate. Residue histidine 95 is the Electrophile of the active site. The active-site Proton acceptor is the glutamate 167. Residues glycine 173, serine 211, and glycine 232–glycine 233 contribute to the substrate site.

It belongs to the triosephosphate isomerase family. In terms of assembly, homodimer.

Its subcellular location is the cytoplasm. The catalysed reaction is D-glyceraldehyde 3-phosphate = dihydroxyacetone phosphate. It functions in the pathway carbohydrate biosynthesis; gluconeogenesis. It participates in carbohydrate degradation; glycolysis; D-glyceraldehyde 3-phosphate from glycerone phosphate: step 1/1. In terms of biological role, involved in the gluconeogenesis. Catalyzes stereospecifically the conversion of dihydroxyacetone phosphate (DHAP) to D-glyceraldehyde-3-phosphate (G3P). This chain is Triosephosphate isomerase, found in Marinobacter nauticus (strain ATCC 700491 / DSM 11845 / VT8) (Marinobacter aquaeolei).